A 327-amino-acid chain; its full sequence is Spermidine/putrescine import ATP-binding protein PotA (327 aa).

An ABC transporter domain is found at 5–235 (IKVEAVEKHF…PKTLFVATFI (231 aa)). 37–44 (GPSGCGKT) provides a ligand contact to ATP.

This sequence belongs to the ABC transporter superfamily. Spermidine/putrescine importer (TC 3.A.1.11.1) family. The complex is composed of two ATP-binding proteins (PotA), two transmembrane proteins (PotB and PotC) and a solute-binding protein (PotD).

The protein resides in the cell membrane. The enzyme catalyses ATP + H2O + polyamine-[polyamine-binding protein]Side 1 = ADP + phosphate + polyamineSide 2 + [polyamine-binding protein]Side 1.. Its function is as follows. Part of the ABC transporter complex PotABCD involved in spermidine/putrescine import. Responsible for energy coupling to the transport system. The chain is Spermidine/putrescine import ATP-binding protein PotA from Bacillus cereus (strain ATCC 14579 / DSM 31 / CCUG 7414 / JCM 2152 / NBRC 15305 / NCIMB 9373 / NCTC 2599 / NRRL B-3711).